The chain runs to 330 residues: Bifunctional pinoresinol-lariciresinol reductase 2 (330 aa).

Residues 28-34, R53, and K62 each bind NADP(+); that span reads GGTGYLG. K156 acts as the Proton acceptor in catalysis. R160 is an NADP(+) binding site. Residue H288 participates in substrate binding.

Belongs to the NmrA-type oxidoreductase family. Isoflavone reductase subfamily. Dimer. As to expression, expressed in leaves, stems, leaves and seeds.

It carries out the reaction (+)-lariciresinol + NADP(+) = (+)-pinoresinol + NADPH + H(+). The catalysed reaction is (-)-secoisolariciresinol + NADP(+) = (+)-lariciresinol + NADPH + H(+). In terms of biological role, reductase involved in lignan biosynthesis. Catalyzes the enantioselective conversion of (+)-pinoresinol into (+)-lariciresinol and of (+)-lariciresinol into (-)-secoisolariciresinol. Abstracts the 4R-hydride from the NADPH cofactor during catalysis. This Linum usitatissimum (Flax) protein is Bifunctional pinoresinol-lariciresinol reductase 2 (PLR_Lu2).